The following is a 476-amino-acid chain: Glutamate--tRNA ligase (476 aa).

Positions 9–19 (PSPTGTLHLGT) match the 'HIGH' region motif. The 'KMSKS' region signature appears at 248 to 252 (KLSKR). Lys-251 lines the ATP pocket.

This sequence belongs to the class-I aminoacyl-tRNA synthetase family. Glutamate--tRNA ligase type 1 subfamily. Monomer.

Its subcellular location is the cytoplasm. The catalysed reaction is tRNA(Glu) + L-glutamate + ATP = L-glutamyl-tRNA(Glu) + AMP + diphosphate. Functionally, catalyzes the attachment of glutamate to tRNA(Glu) in a two-step reaction: glutamate is first activated by ATP to form Glu-AMP and then transferred to the acceptor end of tRNA(Glu). The chain is Glutamate--tRNA ligase from Prochlorococcus marinus (strain NATL2A).